Reading from the N-terminus, the 216-residue chain is ATP-dependent Clp protease proteolytic subunit (216 aa).

The active-site Nucleophile is the Ser-109. His-134 is a catalytic residue.

The protein belongs to the peptidase S14 family. Fourteen ClpP subunits assemble into 2 heptameric rings which stack back to back to give a disk-like structure with a central cavity, resembling the structure of eukaryotic proteasomes.

It is found in the cytoplasm. It carries out the reaction Hydrolysis of proteins to small peptides in the presence of ATP and magnesium. alpha-casein is the usual test substrate. In the absence of ATP, only oligopeptides shorter than five residues are hydrolyzed (such as succinyl-Leu-Tyr-|-NHMec, and Leu-Tyr-Leu-|-Tyr-Trp, in which cleavage of the -Tyr-|-Leu- and -Tyr-|-Trp bonds also occurs).. Functionally, cleaves peptides in various proteins in a process that requires ATP hydrolysis. Has a chymotrypsin-like activity. Plays a major role in the degradation of misfolded proteins. This chain is ATP-dependent Clp protease proteolytic subunit, found in Rhodospirillum rubrum (strain ATCC 11170 / ATH 1.1.1 / DSM 467 / LMG 4362 / NCIMB 8255 / S1).